A 526-amino-acid polypeptide reads, in one-letter code: Peptide chain release factor 3 (526 aa).

The tr-type G domain maps to 9–277 (NKRRTFAIIS…DFVEYAPGPQ (269 aa)). Residues 18–25 (SHPDAGKT), 86–90 (DTPGH), and 140–143 (NKLD) each bind GTP.

The protein belongs to the TRAFAC class translation factor GTPase superfamily. Classic translation factor GTPase family. PrfC subfamily.

The protein localises to the cytoplasm. In terms of biological role, increases the formation of ribosomal termination complexes and stimulates activities of RF-1 and RF-2. It binds guanine nucleotides and has strong preference for UGA stop codons. It may interact directly with the ribosome. The stimulation of RF-1 and RF-2 is significantly reduced by GTP and GDP, but not by GMP. The polypeptide is Peptide chain release factor 3 (Legionella pneumophila (strain Corby)).